Here is a 687-residue protein sequence, read N- to C-terminus: MRLRNDCLVRLLTSWFGIFCLYEMTEGSAEPPPCPGARRRRLLLSLPNVFPGRTRAAPEPSVPSPPPSPPPPPPPPVSVPPPPSSPGGSESLIECPLCLVRQPPEEIPELLSCRHRSCLRCLRQYLRIEICESRVNLRCPECAERLSPQHVRAILRDPLLTRKYEEFLLRRCLAADPDCRWCPAPDCGYAVIAYGCASCPKLTCEREGCRTEFCYHCKHVWHPNQTCDMARQQRAPSLGVRRKHPSGISYGQESGSADDMKSCPRCSAYIIKMNDGSCNHMTCSVCGCEFCWLCMKEISDLHYLSPSGCTFWGKKPWSRKKKIIWQLSTLIGAPVGISLIAGIAIPAMVIGIPVYVGRKIHGRFENKKTSRHKKNLAVTGGVILSVIASPVVAAVSVGIGVPIMLAYVYGVVPVSLCRGGGCGVTTANGKGVKIDFEEDGPITVADAWRALKNPSIGESSMEGLTSVLSTSGSPTDGLSVLQGNYSETASFAALAGGTLTGGMLSGGRAKYCRLEVQADVQKETCQKDSVSLGAVSDSASTRAMAGSIISSYNPQEREVNNMEIQVHIEAKPSRYQLMSESSTEESLHASAPLVESEDAEACRNQVAACDITLAQPESIRSDLESSDAQSDDVPDLASEEYDSPHLFPPSPSNALQESPPHRMCAQEEGLCAHEESLSKVEIIELRV.

The interval 1–294 is required for ubiquitin ligase activity and for protection against staurosporin-induced cell death; the sequence is MRLRNDCLVR…VCGCEFCWLC (294 aa). Residues 53 to 88 form a disordered region; the sequence is RTRAAPEPSVPSPPPSPPPPPPPPVSVPPPPSSPGG. Residues 60-85 show a composition bias toward pro residues; sequence PSVPSPPPSPPPPPPPPVSVPPPPSS. The segment at 91 to 313 is TRIAD supradomain; sequence SLIECPLCLV…LSPSGCTFWG (223 aa). Cys-95, Cys-98, Cys-118, Cys-121, Cys-182, Cys-187, Cys-204, Cys-209, Cys-214, Cys-217, His-222, Cys-227, Cys-263, and Cys-266 together coordinate Zn(2+). An RING-type 1 zinc finger spans residues 95–144; that stretch reads CPLCLVRQPPEEIPELLSCRHRSCLRCLRQYLRIEICESRVNLRCPECAE. The IBR-type zinc finger occupies 161–227; sequence TRKYEEFLLR…KHVWHPNQTC (67 aa). The RING-type 2; atypical zinc-finger motif lies at 263 to 294; sequence CPRCSAYIIKMNDGSCNHMTCSVCGCEFCWLC. Residue Cys-278 is part of the active site. Zn(2+)-binding residues include Cys-283, Cys-286, Cys-291, Cys-294, His-302, and Cys-309. The next 2 helical transmembrane spans lie at 330–350 and 391–411; these read LIGA…AMVI and VVAA…VYGV. Residues 618–662 are disordered; that stretch reads SIRSDLESSDAQSDDVPDLASEEYDSPHLFPPSPSNALQESPPHR. A compositionally biased stretch (acidic residues) spans 629–641; the sequence is QSDDVPDLASEEY.

It belongs to the RBR family. RNF19 subfamily. As to quaternary structure, interacts with UBE2L3, UBE2L6 and UCKL1.

It is found in the cytoplasmic granule membrane. Its subcellular location is the endoplasmic reticulum membrane. It carries out the reaction [E2 ubiquitin-conjugating enzyme]-S-ubiquitinyl-L-cysteine + [acceptor protein]-L-lysine = [E2 ubiquitin-conjugating enzyme]-L-cysteine + [acceptor protein]-N(6)-ubiquitinyl-L-lysine.. The protein operates within protein modification; protein ubiquitination. Functionally, E3 ubiquitin-protein ligase which accepts ubiquitin from E2 ubiquitin-conjugating enzymes UBE2L3 and UBE2L6 in the form of a thioester and then directly transfers the ubiquitin to targeted substrates, such as UCKL1. Involved in the cytolytic activity of natural killer cells and cytotoxic T-cells. Protects against staurosporin-induced cell death. This is E3 ubiquitin-protein ligase RNF19B (rnf19b) from Xenopus laevis (African clawed frog).